Here is a 603-residue protein sequence, read N- to C-terminus: Glutamyl-tRNA(Gln) amidotransferase subunit B, mitochondrial (603 aa).

Disordered regions lie at residues 38–61 (RGRDWSSTSRRAIDTQTSGASNGA) and 72–91 (EQAREGRAATRKGEVSPPEH). Residues 42-58 (WSSTSRRAIDTQTSGAS) are compositionally biased toward polar residues.

The protein belongs to the GatB/GatE family. GatB subfamily. In terms of assembly, subunit of the heterotrimeric GatCAB amidotransferase (AdT) complex, composed of A, B and C subunits.

It localises to the mitochondrion. The enzyme catalyses L-glutamyl-tRNA(Gln) + L-glutamine + ATP + H2O = L-glutaminyl-tRNA(Gln) + L-glutamate + ADP + phosphate + H(+). In terms of biological role, allows the formation of correctly charged Gln-tRNA(Gln) through the transamidation of misacylated Glu-tRNA(Gln) in the mitochondria. The reaction takes place in the presence of glutamine and ATP through an activated gamma-phospho-Glu-tRNA(Gln). This chain is Glutamyl-tRNA(Gln) amidotransferase subunit B, mitochondrial, found in Paracoccidioides brasiliensis (strain Pb18).